The following is a 381-amino-acid chain: Neuropeptide Y receptor type 2 (381 aa).

The interval 1-35 is disordered; it reads MGPIGTEADENQTVEEMKVEQYGPQTTPRGELVPD. The Extracellular portion of the chain corresponds to 1-51; the sequence is MGPIGTEADENQTVEEMKVEQYGPQTTPRGELVPDPEPELIDSTKLIEVQV. An N-linked (GlcNAc...) asparagine glycan is attached at Asn-11. The helical transmembrane segment at 52 to 72 threads the bilayer; the sequence is VLILAYCSIILLGVIGNSLVI. Residues 73–86 lie on the Cytoplasmic side of the membrane; sequence HVVIKFKSMRTVTN. The helical transmembrane segment at 87 to 107 threads the bilayer; sequence FFIANLAVADLVVNTLCLPFT. At 108–124 the chain is on the extracellular side; that stretch reads LTYTLMGEWKMGPVLCH. Cys-123 and Cys-203 are oxidised to a cystine. A helical transmembrane segment spans residues 125 to 145; sequence LVPYAQGLAVQVSTITLTVIA. The Cytoplasmic segment spans residues 146 to 165; sequence LDRHRCIVYHLESKISKRIS. The helical transmembrane segment at 166–186 threads the bilayer; the sequence is FLIIGLAWGISALLASPLAIF. Topologically, residues 187-216 are extracellular; the sequence is REYSLIEIIPDFEIVACTEKWPGEEKSIYG. Residues 217-237 form a helical membrane-spanning segment; it reads TVYSLSSLLILYVLPLGIISF. Over 238–268 the chain is Cytoplasmic; that stretch reads SYTRIWSKLKSHVSPGAANDHYHQRRQKTTK. The helical transmembrane segment at 269-289 threads the bilayer; the sequence is MLVCVVVVFAVSWLPLHAFQL. Residues 290–304 are Extracellular-facing; it reads AVDIDSHVLDLKEYK. Residues 305-325 traverse the membrane as a helical segment; it reads LIFTVFHIIAMCSTFANPLLY. Over 326–381 the chain is Cytoplasmic; the sequence is GWMNSNYRKAFLSAFRCEQRLDAIHSEVSVTFKAKKNLEVRKNSGPNDSFTEATNV. The S-palmitoyl cysteine moiety is linked to residue Cys-342.

This sequence belongs to the G-protein coupled receptor 1 family.

It localises to the cell membrane. Functionally, receptor for neuropeptide Y and peptide YY. The sequence is that of Neuropeptide Y receptor type 2 (NPY2R) from Macaca mulatta (Rhesus macaque).